The primary structure comprises 537 residues: Chaperonin GroEL 1 (537 aa).

ATP-binding positions include 29–32 (TLGP), 86–90 (DGTTT), Gly413, and Asp494.

It belongs to the chaperonin (HSP60) family. In terms of assembly, forms a cylinder of 14 subunits composed of two heptameric rings stacked back-to-back. Interacts with the co-chaperonin GroES.

The protein resides in the cytoplasm. The catalysed reaction is ATP + H2O + a folded polypeptide = ADP + phosphate + an unfolded polypeptide.. Its function is as follows. Together with its co-chaperonin GroES, plays an essential role in assisting protein folding. The GroEL-GroES system forms a nano-cage that allows encapsulation of the non-native substrate proteins and provides a physical environment optimized to promote and accelerate protein folding. This Mycobacterium leprae (strain TN) protein is Chaperonin GroEL 1.